The chain runs to 254 residues: Fasciclin-like arabinogalactan protein 7 (254 aa).

A signal peptide spans 1 to 22 (MAKMQLSIFIAVVALIVCSASA). The FAS1 domain maps to 44 to 186 (NVNLTELLSV…VAVYQVNRVL (143 aa)). N-linked (GlcNAc...) asparagine glycans are attached at residues N46, N78, N104, and N130. The segment at 203-233 (APAPIVSAPSDSPSVADSEGASSPKSSHKNS) is disordered. Residues 206–220 (PIVSAPSDSPSVADS) show a composition bias toward low complexity. Polar residues predominate over residues 222 to 233 (GASSPKSSHKNS). N232 carries the GPI-anchor amidated asparagine lipid modification. A propeptide spans 233-254 (SGQKLLLAPISMVISGLVALFL) (removed in mature form).

Belongs to the fasciclin-like AGP family.

The protein localises to the cell membrane. May be a cell surface adhesion protein. The polypeptide is Fasciclin-like arabinogalactan protein 7 (FLA7) (Arabidopsis thaliana (Mouse-ear cress)).